A 31-amino-acid polypeptide reads, in one-letter code: Conotoxin Cltx-2 (31 aa).

4-hydroxyproline is present on residues proline 6 and proline 31.

Post-translationally, contains 4 disulfide bonds. Expressed by the venom duct.

It is found in the secreted. In Californiconus californicus (California cone), this protein is Conotoxin Cltx-2.